The chain runs to 669 residues: MDTASSPPNAERKRAGWGRLLGARRGSAGLAKKCPFSLELAEGGPTGGTVYAPIAPTGAPGLAPPMSPPVSPVPAPADLGPRPRVSLDPRVSIYSTRRPLLARTHIQGRVYNFLERPTGWKCFVYHFTVFLIVLVCLIFSVLSTIEQYAALATGTLFWMEIVLVVFFGTEYVVRLWSAGCRSKYVGIWGRLRFARKPISIIDLIVVVASMVVLCVGSKGQVFATSAIRGIRFLQILRMLHVDRQGGTWRLLGSVVFIHRQELITTLYIGFLGLIFSSYFVYLAEKDAVNESGRIEFGSYADALWWGVVTVTTIGYGDKVPQTWVGKTIASCFSVFAISFFALPAGILGSGFALKVQQKQRQKHFNRQIPAAASLIQTAWRCYAAENPDSSTWKIYVRKPARSHTLLSPSPKPKKSVMVKKKKFKLDKDNGLSPGEKIFNVPHITCDPPEDRRPDHFSIDGYDSSVRKSPTLLEVSTPHFLRTNSFAEDLDLEGETLLTPITHVSQLRDHHRATIKVIRRMQYFVAKKKFQQARKPYDVRDVIEQYSQGHLNLMVRIKELQRRLDQSIGKPSLFIPISEKSKDRGSNTIGARLNRVEDKVTQLDQRLVIITDMLHQLLSLQQGGPTCNNRSQVVASDERGSINPELFLPSNSLPTYEQLTVPQTGPDEGS.

Over 1–120 (MDTASSPPNA…YNFLERPTGW (120 aa)) the chain is Cytoplasmic. A Phosphoserine; by PKA modification is found at Ser27. A helical transmembrane segment spans residues 121-142 (KCFVYHFTVFLIVLVCLIFSVL). The Extracellular portion of the chain corresponds to 143-153 (STIEQYAALAT). A helical membrane pass occupies residues 154-176 (GTLFWMEIVLVVFFGTEYVVRLW). Over 177 to 192 (SAGCRSKYVGIWGRLR) the chain is Cytoplasmic. Residues 193 to 218 (FARKPISIIDLIVVVASMVVLCVGSK) form a helical membrane-spanning segment. Over 219–226 (GQVFATSA) the chain is Extracellular. Residues 227–242 (IRGIRFLQILRMLHVD) traverse the membrane as a helical; Voltage-sensor segment. An interaction with KCNE3 region spans residues 238 to 246 (MLHVDRQGG). At 243–260 (RQGGTWRLLGSVVFIHRQ) the chain is on the cytoplasmic side. Position 244 (Gln244) interacts with a 1,2-diacyl-sn-glycero-3-phospho-(1D-myo-inositol-4,5-bisphosphate). A helical transmembrane segment spans residues 261–283 (ELITTLYIGFLGLIFSSYFVYLA). The Extracellular segment spans residues 284–299 (EKDAVNESGRIEFGSY). Asn289 carries an N-linked (GlcNAc...) asparagine glycan. Positions 300 to 320 (ADALWWGVVTVTTIGYGDKVP) form an intramembrane region, pore-forming. Residues 321 to 322 (QT) are Extracellular-facing. A helical transmembrane segment spans residues 323 to 348 (WVGKTIASCFSVFAISFFALPAGILG). Over 349–669 (SGFALKVQQK…VPQTGPDEGS (321 aa)) the chain is Cytoplasmic. An interaction with CALM region spans residues 370–382 (AAASLIQTAWRCY). Ser407 and Ser409 each carry phosphoserine. Residues 515–529 (KVIRRMQYFVAKKKF) are interaction with CALM; calcium-dependent. The interaction with KCNE1 C-terminus stretch occupies residues 535 to 572 (PYDVRDVIEQYSQGHLNLMVRIKELQRRLDQSIGKPSL). The stretch at 585 to 621 (SNTIGARLNRVEDKVTQLDQRLVIITDMLHQLLSLQQ) forms a coiled coil. The tract at residues 588 to 616 (IGARLNRVEDKVTQLDQRLVIITDMLHQL) is interaction with AKAP9. Positions 589–620 (GARLNRVEDKVTQLDQRLVIITDMLHQLLSLQ) are C-terminal assembly domain (tetramerization).

The protein belongs to the potassium channel family. KQT (TC 1.A.1.15) subfamily. Kv7.1/KCNQ1 sub-subfamily. Tetramer. Heterotetramer with KCNE1; targets to the membrane raft. Interacts (via C-terminus) with CALM; forms a heterooctameric structure (with 4:4 KCNQ1:CALM stoichiometry) in a calcium-independent manner. Interacts with AKAP9; targets protein kinase A (PKA) catalytic and regulatory subunits and protein phosphatase 1 (PP1) to the KCNQ1-KCNE1 complex, allowing PKA-mediated phosphorylation and increase of delayed rectifier potassium channel activity. Interacts with KCNE2; form a heterooligomer complex that targets to the membrane raft and leading to currents with an apparently instantaneous activation, a rapid deactivation process and a linear current-voltage relationship and decreases the amplitude of the outward current. Interacts with AP2M1; mediates estrogen-induced internalization via clathrin-coated vesicles. Interacts with NEDD4L; promotes internalization and decreases I(Ks) currents. Interacts with USP2; counteracts the NEDD4L-specific down-regulation of I(Ks) and restore plasma membrane localization. Heterotetramer with KCNQ5; has a voltage-gated potassium channel activity. Interacts with KCNE3; produces a current with nearly instantaneous activation with a linear current-voltage relationship and alters membrane raft localization. Interacts with KCNE4; impairs KCNQ1 localization in lipid rafts and inhibits voltage-gated potassium channel activity. Interacts with KCNE5; impairs KCNQ1 localization in lipid rafts and only conducts current upon strong and continued depolarization. Interacts with SLC5A3; forms coregulatory channel-transporter complexes that modulate Na(+)-coupled myo-inositol influx through the transporter. Phosphorylation at Ser-27 by PKA; increases delayed rectifier potassium channel activity of the KCNQ1-KCNE1 complex through a macromolecular complex that includes PKA, PP1, and the targeting protein AKAP9. In terms of processing, ubiquitinated by NEDD4L; promotes internalization. The ubiquitinylated form is internalized through a clathrin-mediated endocytosis by interacting with AP2M1 and is recycled back to the cell membrane via RAB4A and RAB11A. Post-translationally, deubiquitinated by USP2; counteracts the NEDD4L-specific down-regulation of I(Ks) and restores the membrane localization.

Its subcellular location is the cell membrane. It localises to the cytoplasmic vesicle membrane. The protein localises to the early endosome. The protein resides in the membrane raft. It is found in the endoplasmic reticulum. Its subcellular location is the basolateral cell membrane. It localises to the apical cell membrane. The enzyme catalyses K(+)(in) = K(+)(out). Its activity is regulated as follows. PIP2 molecule is essential to activate KCNQ channels by inducing the coupling of the voltage-sensing domain (VSD) and the pore-forming domain (PD). Upon channel activation, PIP2 disrupts the VSD-calmodulin/CALM interactions, causing the release of CALM from the VSD which triggers the opening of the gate. Calcium potentiates KCNQ1 channel current through calcium-bound CALM. Calcium-bound CALM competes with PIP2 to stabilize the channel open state. In terms of biological role, pore-forming subunit of the voltage-gated potassium (Kv) channel involved in the regulation of cardiomyocyte excitability and important in normal development and functions of myocardium, inner ear, stomach and colon. Associates with KCNE beta subunits that modulates current kinetics. Induces a voltage-dependent by rapidly activating and slowly deactivating potassium-selective outward current. Also promotes a delayed voltage activated potassium current showing outward rectification characteristic. During beta-adrenergic receptor stimulation participates in cardiac repolarization by associating with KCNE1 to form the I(Ks) cardiac potassium current that increases the amplitude and slows down the activation kinetics of outward potassium current I(Ks). Muscarinic agonist oxotremorine-M strongly suppresses KCNQ1/KCNE1 current. When associated with KCNE3, forms the potassium channel that is important for cyclic AMP-stimulated intestinal secretion of chloride ions. This interaction with KCNE3 is reduced by 17beta-estradiol, resulting in the reduction of currents. During conditions of increased substrate load, maintains the driving force for proximal tubular and intestinal sodium ions absorption, gastric acid secretion, and cAMP-induced jejunal chloride ions secretion. Allows the provision of potassium ions to the luminal membrane of the secretory canaliculus in the resting state as well as during stimulated acid secretion. When associated with KCNE2, forms a heterooligomer complex leading to currents with an apparently instantaneous activation, a rapid deactivation process and a linear current-voltage relationship and decreases the amplitude of the outward current. When associated with KCNE4, inhibits voltage-gated potassium channel activity. When associated with KCNE5, this complex only conducts current upon strong and continued depolarization. Also forms a heterotetramer with KCNQ5 that has a voltage-gated potassium channel activity. Binds with phosphatidylinositol 4,5-bisphosphate. KCNQ1-KCNE2 channel associates with Na(+)-coupled myo-inositol symporter in the apical membrane of choroid plexus epithelium and regulates the myo-inositol gradient between blood and cerebrospinal fluid with an impact on neuron excitability. The protein is Potassium voltage-gated channel subfamily KQT member 1 of Rattus norvegicus (Rat).